The chain runs to 472 residues: Ribulose bisphosphate carboxylase large chain 1 (472 aa).

Asparagine 115 and threonine 165 together coordinate substrate. The active-site Proton acceptor is lysine 167. Residue lysine 169 coordinates substrate. Mg(2+) is bound by residues lysine 193, aspartate 195, and glutamate 196. At lysine 193 the chain carries N6-carboxylysine. Histidine 286 functions as the Proton acceptor in the catalytic mechanism. Substrate is bound by residues arginine 287, histidine 319, and serine 371.

It belongs to the RuBisCO large chain family. Type I subfamily. Heterohexadecamer of 8 large chains and 8 small chains. The cofactor is Mg(2+).

It carries out the reaction 2 (2R)-3-phosphoglycerate + 2 H(+) = D-ribulose 1,5-bisphosphate + CO2 + H2O. The catalysed reaction is D-ribulose 1,5-bisphosphate + O2 = 2-phosphoglycolate + (2R)-3-phosphoglycerate + 2 H(+). Its function is as follows. RuBisCO catalyzes two reactions: the carboxylation of D-ribulose 1,5-bisphosphate, the primary event in carbon dioxide fixation, as well as the oxidative fragmentation of the pentose substrate. Both reactions occur simultaneously and in competition at the same active site. This Allochromatium vinosum (strain ATCC 17899 / DSM 180 / NBRC 103801 / NCIMB 10441 / D) (Chromatium vinosum) protein is Ribulose bisphosphate carboxylase large chain 1.